A 342-amino-acid polypeptide reads, in one-letter code: Ribosomal RNA small subunit methyltransferase C (342 aa).

The protein belongs to the methyltransferase superfamily. RsmC family. In terms of assembly, monomer.

Its subcellular location is the cytoplasm. It catalyses the reaction guanosine(1207) in 16S rRNA + S-adenosyl-L-methionine = N(2)-methylguanosine(1207) in 16S rRNA + S-adenosyl-L-homocysteine + H(+). In terms of biological role, specifically methylates the guanine in position 1207 of 16S rRNA in the 30S particle. The sequence is that of Ribosomal RNA small subunit methyltransferase C from Salmonella gallinarum (strain 287/91 / NCTC 13346).